A 311-amino-acid polypeptide reads, in one-letter code: Vomeronasal type-1 receptor 105 (311 aa).

Over 1-17 the chain is Extracellular; it reads MMNKNSRLYTDSNIRNT. A helical transmembrane segment spans residues 18–38; sequence FFAEIGIGVSANSLLLLFNIF. At 39 to 50 the chain is on the cytoplasmic side; that stretch reads KLICGQRSRLTD. Residues 51 to 71 form a helical membrane-spanning segment; sequence LPIGLLSLINLLMLLMTAFIA. Over 72-94 the chain is Extracellular; it reads TDTFISWRGWDDIICKSLLYLYR. A disulfide bridge connects residues Cys86 and Cys173. The helical transmembrane segment at 95–115 threads the bilayer; that stretch reads TFRGLSLCTSCLLSVLQAIIL. Topologically, residues 116–135 are cytoplasmic; that stretch reads SPRSSCLAKFKHKPSHHISC. The chain crosses the membrane as a helical span at residues 136–156; sequence AILSLSVLYMFISSHLLVSII. Topologically, residues 157 to 188 are extracellular; the sequence is ATPNLTTNDFIHVTQWCSILPMSYLMQSMFST. A glycan (N-linked (GlcNAc...) asparagine) is linked at Asn160. A helical membrane pass occupies residues 189-209; that stretch reads LLAIRDVFLISLMVLSTWYMV. Residues 210–239 lie on the Cytoplasmic side of the membrane; that stretch reads ALLCRHRKQTRHLQGTSLSPKASPEQRATR. Residues 240–260 form a helical membrane-spanning segment; that stretch reads SILMLMSLFVLMSVFDSIVCS. Over 261–271 the chain is Extracellular; the sequence is SRTMYLNDPIS. Residues 272 to 292 traverse the membrane as a helical segment; it reads YSYQLFMVHIYATVSPFVFIV. The Cytoplasmic portion of the chain corresponds to 293–311; the sequence is TEKHIVNSLRSMCVKVMNV.

It belongs to the G-protein coupled receptor 1 family. Expressed in 1-4% of neurons of the vomeronasal organ. Only one pheromone receptor gene may be expressed in a particular neuron. Not expressed in the main olfactory epithelium.

It is found in the cell membrane. In terms of biological role, putative pheromone receptor implicated in the regulation of social as well as reproductive behavior. The polypeptide is Vomeronasal type-1 receptor 105 (Vom1r105) (Rattus norvegicus (Rat)).